The primary structure comprises 726 residues: Catalase-peroxidase (726 aa).

Residues 90–213 constitute a cross-link (tryptophyl-tyrosyl-methioninium (Trp-Tyr) (with M-239)); that stretch reads WHAAGTYRIG…LAAVQMGLIY (124 aa). His-91 functions as the Proton acceptor in the catalytic mechanism. Positions 213–239 form a cross-link, tryptophyl-tyrosyl-methioninium (Tyr-Met) (with W-90); sequence YVNPEGPNGNPDPLAAARDIRETFARM. His-254 is a binding site for heme b. Positions 334 to 359 are disordered; it reads AHQWKPKHGAGANTVPDAHDPSKRHA.

Belongs to the peroxidase family. Peroxidase/catalase subfamily. As to quaternary structure, homodimer or homotetramer. Heme b is required as a cofactor. Formation of the three residue Trp-Tyr-Met cross-link is important for the catalase, but not the peroxidase activity of the enzyme.

It carries out the reaction H2O2 + AH2 = A + 2 H2O. The catalysed reaction is 2 H2O2 = O2 + 2 H2O. In terms of biological role, bifunctional enzyme with both catalase and broad-spectrum peroxidase activity. The sequence is that of Catalase-peroxidase from Bradyrhizobium sp. (strain BTAi1 / ATCC BAA-1182).